The primary structure comprises 1375 residues: DNA-directed RNA polymerase subunit beta' (1375 aa).

Zn(2+) contacts are provided by Cys70, Cys72, Cys85, and Cys88. Asp461, Asp463, and Asp465 together coordinate Mg(2+). Residues Cys797, Cys871, Cys878, and Cys881 each contribute to the Zn(2+) site.

The protein belongs to the RNA polymerase beta' chain family. The RNAP catalytic core consists of 2 alpha, 1 beta, 1 beta' and 1 omega subunit. When a sigma factor is associated with the core the holoenzyme is formed, which can initiate transcription. It depends on Mg(2+) as a cofactor. Requires Zn(2+) as cofactor.

The enzyme catalyses RNA(n) + a ribonucleoside 5'-triphosphate = RNA(n+1) + diphosphate. In terms of biological role, DNA-dependent RNA polymerase catalyzes the transcription of DNA into RNA using the four ribonucleoside triphosphates as substrates. The chain is DNA-directed RNA polymerase subunit beta' from Neorickettsia sennetsu (strain ATCC VR-367 / Miyayama) (Ehrlichia sennetsu).